The sequence spans 508 residues: Photosystem II CP47 reaction center protein (508 aa).

6 helical membrane-spanning segments follow: residues 21–36, 101–115, 140–156, 203–218, 237–252, and 457–472; these read AVHI…WAGS, IVFS…IWHW, GIHL…FGAF, IAAG…FHLS, VLSS…AFVV, and SFAL…HGAR.

Belongs to the PsbB/PsbC family. PsbB subfamily. In terms of assembly, PSII is composed of 1 copy each of membrane proteins PsbA, PsbB, PsbC, PsbD, PsbE, PsbF, PsbH, PsbI, PsbJ, PsbK, PsbL, PsbM, PsbT, PsbX, PsbY, PsbZ, Psb30/Ycf12, at least 3 peripheral proteins of the oxygen-evolving complex and a large number of cofactors. It forms dimeric complexes. Binds multiple chlorophylls. PSII binds additional chlorophylls, carotenoids and specific lipids. is required as a cofactor.

It is found in the plastid. The protein resides in the chloroplast thylakoid membrane. One of the components of the core complex of photosystem II (PSII). It binds chlorophyll and helps catalyze the primary light-induced photochemical processes of PSII. PSII is a light-driven water:plastoquinone oxidoreductase, using light energy to abstract electrons from H(2)O, generating O(2) and a proton gradient subsequently used for ATP formation. This is Photosystem II CP47 reaction center protein from Nandina domestica (Heavenly bamboo).